The sequence spans 190 residues: Probable RNA-binding protein 18 (190 aa).

In terms of domain architecture, RRM spans H25 to A106.

This Xenopus laevis (African clawed frog) protein is Probable RNA-binding protein 18 (rbm18).